Reading from the N-terminus, the 412-residue chain is 1-deoxy-D-xylulose 5-phosphate reductoisomerase (412 aa).

8 residues coordinate NADPH: Thr10, Gly11, Ser12, Ile13, Gly36, Lys37, Asn38, and Asn130. Position 131 (Lys131) interacts with 1-deoxy-D-xylulose 5-phosphate. Position 132 (Glu132) interacts with NADPH. Asp156 is a binding site for Mn(2+). The 1-deoxy-D-xylulose 5-phosphate site is built by Ser157, Glu158, Ser194, and His217. A Mn(2+)-binding site is contributed by Glu158. Gly223 is an NADPH binding site. Residues Ser230, Asn235, Lys236, and Glu239 each coordinate 1-deoxy-D-xylulose 5-phosphate. Glu239 is a binding site for Mn(2+).

This sequence belongs to the DXR family. Mg(2+) serves as cofactor. It depends on Mn(2+) as a cofactor.

The enzyme catalyses 2-C-methyl-D-erythritol 4-phosphate + NADP(+) = 1-deoxy-D-xylulose 5-phosphate + NADPH + H(+). It functions in the pathway isoprenoid biosynthesis; isopentenyl diphosphate biosynthesis via DXP pathway; isopentenyl diphosphate from 1-deoxy-D-xylulose 5-phosphate: step 1/6. In terms of biological role, catalyzes the NADPH-dependent rearrangement and reduction of 1-deoxy-D-xylulose-5-phosphate (DXP) to 2-C-methyl-D-erythritol 4-phosphate (MEP). This is 1-deoxy-D-xylulose 5-phosphate reductoisomerase from Prochlorococcus marinus (strain NATL2A).